Reading from the N-terminus, the 839-residue chain is Translation initiation factor IF-2 (839 aa).

2 stretches are compositionally biased toward basic and acidic residues: residues 1-12 (MSDNEIKNETPK) and 57-67 (AEAKAQEKQAA). Disordered stretches follow at residues 1 to 21 (MSDN…RRTK) and 57 to 244 (AEAK…GASL). Low complexity predominate over residues 68–90 (EKAAQAQTEAKAQTEQACTTKKT). 3 stretches are compositionally biased toward basic and acidic residues: residues 104–167 (PKTE…REET), 185–199 (READ…EGNR), and 212–233 (GGRE…DIKG). One can recognise a tr-type G domain in the interval 338-508 (TRAPVVTIMG…ILQSEVLELT (171 aa)). The G1 stretch occupies residues 347–354 (GHVDHGKT). 347-354 (GHVDHGKT) serves as a coordination point for GTP. Positions 372-376 (GITQH) are G2. Residues 394–397 (DTPG) form a G3 region. Residues 394-398 (DTPGH) and 448-451 (NKID) each bind GTP. The segment at 448-451 (NKID) is G4. The tract at residues 484–486 (SAK) is G5.

The protein belongs to the TRAFAC class translation factor GTPase superfamily. Classic translation factor GTPase family. IF-2 subfamily.

The protein resides in the cytoplasm. Functionally, one of the essential components for the initiation of protein synthesis. Protects formylmethionyl-tRNA from spontaneous hydrolysis and promotes its binding to the 30S ribosomal subunits. Also involved in the hydrolysis of GTP during the formation of the 70S ribosomal complex. This Haemophilus ducreyi (strain 35000HP / ATCC 700724) protein is Translation initiation factor IF-2.